The chain runs to 640 residues: Asparagine synthetase domain-containing protein 1 (640 aa).

C2 (for GATase activity) is an active-site residue. A Glutamine amidotransferase type-2 domain is found at 2 to 184 (CGICCAVSFS…ASGIFRIDLK (183 aa)). Positions 286–602 (QFIGVLSTAV…GLTASALLPK (317 aa)) constitute an Asparagine synthetase domain.

The sequence is that of Asparagine synthetase domain-containing protein 1 (ASNSD1) from Bos taurus (Bovine).